A 237-amino-acid polypeptide reads, in one-letter code: N-(5'-phosphoribosyl)anthranilate isomerase (237 aa).

Belongs to the TrpF family.

It carries out the reaction N-(5-phospho-beta-D-ribosyl)anthranilate = 1-(2-carboxyphenylamino)-1-deoxy-D-ribulose 5-phosphate. Its pathway is amino-acid biosynthesis; L-tryptophan biosynthesis; L-tryptophan from chorismate: step 3/5. The chain is N-(5'-phosphoribosyl)anthranilate isomerase from Desulfitobacterium hafniense (strain Y51).